The primary structure comprises 608 residues: MAESIIIRVQSPDGVKRITATKRETAATFLKKVAKEFGFQNNGFSVYINRNKTGEITASSSKSLHLLKIKHGDLLFLFPSSLAGPSSEMETSTSVGLKAFGAPNVVEDEIDQYLSKQDGKIYRSRDPQLCRHGPLGKCVHCVPLEPFDEDYLNHLEPPVKHMSFHAYIRKLTGGADKGKFVALENISCKIKSGCEGHLPWPNGICTKCQPSAITLNRQKYRHVDNIMFENHTVADRFLDFWRKTGNQHFGYLYGRYTEHKDIPLGIRAEVAAIYEPPQIGTQNSLELLEDPKAEVVDEIAAKLGLRKVGWIFTDLVSEDTRKGTVRYSRNKDTYFLSSEECITAGDFQNKHPNICRLSPDGHFGSKFVTAVATGGPDNQVHFEGYQVSNQCMALVRDECLLPCKDAPELGYAKESSSEQYVPDVFYKDIDKFGNEITQLARPLPVEYLIIDITTTFPKDPVYTFSISQNPFPIENRDVLGETQDFHSLATYLSQNTSSVFLDTISDFHLLLFLVTNEVMPLQDSISLLLEAVRTRNEELAQTWKKSEQWATIEQLCSTVGVQLPGLHEFGAVGGSARAATSAMWACQHCTFMNQPGTGHCEMCSLPRT.

Ala-2 bears the N-acetylalanine mark. Lys-179 carries the post-translational modification N6-acetyllysine. The MPN domain maps to 226–363 (IMFENHTVAD…ICRLSPDGHF (138 aa)). The segment at 580–608 (TSAMWACQHCTFMNQPGTGHCEMCSLPRT) adopts a RanBP2-type zinc-finger fold.

The protein belongs to the NPL4 family. As to quaternary structure, heterodimer with UFD1. The heterodimer binds ubiquitinated proteins. The heterodimer binds to VCP and inhibits Golgi membrane fusion. Interacts with ZFAND2B; probably through VCP.

The protein resides in the cytoplasm. It is found in the cytosol. Its subcellular location is the endoplasmic reticulum. The protein localises to the nucleus. It participates in protein degradation; proteasomal ubiquitin-dependent pathway. The ternary complex containing UFD1, VCP and NPLOC4 binds ubiquitinated proteins and is necessary for the export of misfolded proteins from the ER to the cytoplasm, where they are degraded by the proteasome. The NPLOC4-UFD1-VCP complex regulates spindle disassembly at the end of mitosis and is necessary for the formation of a closed nuclear envelope. Acts as a negative regulator of type I interferon production via the complex formed with VCP and UFD1, which binds to RIGI and recruits RNF125 to promote ubiquitination and degradation of RIGI. In Mus musculus (Mouse), this protein is Nuclear protein localization protein 4 homolog (Nploc4).